A 378-amino-acid chain; its full sequence is UDP-4-amino-4-deoxy-L-arabinose--oxoglutarate aminotransferase (378 aa).

Lysine 182 carries the post-translational modification N6-(pyridoxal phosphate)lysine.

Belongs to the DegT/DnrJ/EryC1 family. ArnB subfamily. Homodimer. Requires pyridoxal 5'-phosphate as cofactor.

The catalysed reaction is UDP-4-amino-4-deoxy-beta-L-arabinose + 2-oxoglutarate = UDP-beta-L-threo-pentopyranos-4-ulose + L-glutamate. It participates in nucleotide-sugar biosynthesis; UDP-4-deoxy-4-formamido-beta-L-arabinose biosynthesis; UDP-4-deoxy-4-formamido-beta-L-arabinose from UDP-alpha-D-glucuronate: step 2/3. It functions in the pathway bacterial outer membrane biogenesis; lipopolysaccharide biosynthesis. Functionally, catalyzes the conversion of UDP-4-keto-arabinose (UDP-Ara4O) to UDP-4-amino-4-deoxy-L-arabinose (UDP-L-Ara4N). The modified arabinose is attached to lipid A and is required for resistance to polymyxin and cationic antimicrobial peptides. This is UDP-4-amino-4-deoxy-L-arabinose--oxoglutarate aminotransferase from Aeromonas salmonicida (strain A449).